A 283-amino-acid chain; its full sequence is Pantothenate synthetase (283 aa).

34-41 (MGALHDGH) contributes to the ATP binding site. Residue histidine 41 is the Proton donor of the active site. Residue glutamine 65 coordinates (R)-pantoate. Residue glutamine 65 coordinates beta-alanine. 152–155 (GEKD) is a binding site for ATP. Glutamine 158 is a binding site for (R)-pantoate. ATP contacts are provided by residues valine 181 and 189–192 (MSSR).

The protein belongs to the pantothenate synthetase family. As to quaternary structure, homodimer.

The protein localises to the cytoplasm. The enzyme catalyses (R)-pantoate + beta-alanine + ATP = (R)-pantothenate + AMP + diphosphate + H(+). The protein operates within cofactor biosynthesis; (R)-pantothenate biosynthesis; (R)-pantothenate from (R)-pantoate and beta-alanine: step 1/1. Functionally, catalyzes the condensation of pantoate with beta-alanine in an ATP-dependent reaction via a pantoyl-adenylate intermediate. This Rhodopseudomonas palustris (strain BisB18) protein is Pantothenate synthetase.